A 241-amino-acid chain; its full sequence is Trypsin-1 (241 aa).

The signal sequence occupies residues 1–13; it reads MKSLIFVLLLGAV. Residues 14–19 constitute a propeptide, activation peptide; it reads FAEEDK. The Peptidase S1 domain occupies 20–239; that stretch reads IVGGYECTKH…LSGWVRDTMA (220 aa). Disulfide bonds link Cys-26–Cys-155, Cys-44–Cys-60, Cys-128–Cys-228, Cys-135–Cys-201, Cys-166–Cys-180, and Cys-191–Cys-215. Active-site charge relay system residues include His-59 and Asp-103. The active-site Charge relay system is Ser-195.

It belongs to the peptidase S1 family.

Its subcellular location is the secreted. The protein resides in the extracellular space. The enzyme catalyses Preferential cleavage: Arg-|-Xaa, Lys-|-Xaa.. This Gadus morhua (Atlantic cod) protein is Trypsin-1.